A 131-amino-acid polypeptide reads, in one-letter code: Histone H2B (131 aa).

The segment covering 1–19 (MAPKAEKKPASKAPAEKKP) has biased composition (basic and acidic residues). The segment at 1-38 (MAPKAEKKPASKAPAEKKPAAKKTASSTDGGKKRTKAR) is disordered. N6-acetyllysine; alternate is present on residues lysine 7 and lysine 8. Glycyl lysine isopeptide (Lys-Gly) (interchain with G-Cter in SUMO); alternate cross-links involve residues lysine 7 and lysine 8. Serine 11 bears the Phosphoserine mark. An N6-acetyllysine modification is found at lysine 12. Lysine 17 carries the N6-acetyllysine; alternate modification. Lysine 17 is covalently cross-linked (Glycyl lysine isopeptide (Lys-Gly) (interchain with G-Cter in SUMO); alternate). Lysine 18 is covalently cross-linked (Glycyl lysine isopeptide (Lys-Gly) (interchain with G-Cter in SUMO)). Lysine 125 is covalently cross-linked (Glycyl lysine isopeptide (Lys-Gly) (interchain with G-Cter in ubiquitin)).

Belongs to the histone H2B family. The nucleosome is a histone octamer containing two molecules each of H2A, H2B, H3 and H4 assembled in one H3-H4 heterotetramer and two H2A-H2B heterodimers. The octamer wraps approximately 147 bp of DNA. Monoubiquitinated by the UBC2-BRE1 complex to form H2BK123ub1. H2BK123ub1 gives a specific tag for epigenetic transcriptional activation and is also prerequisite for H3K4me and H3K79me formation. H2BK123ub1 also modulates the formation of double-strand breaks during meiosis and is a prerequisite for DNA-damage checkpoint activation. In terms of processing, phosphorylated by STE20 to form H2BS10ph during progression through meiotic prophase. May be correlated with chromosome condensation. Post-translationally, acetylated by GCN5 to form H2BK11ac and H2BK16ac. H2BK16ac can also be formed by ESA1. Acetylation of N-terminal lysines and particularly formation of H2BK11acK16ac has a positive effect on transcription. Sumoylation to form H2BK6su or H2BK7su, and probably also H2BK16su or H2BK17su, occurs preferentially near the telomeres and represses gene transcription.

The protein localises to the nucleus. The protein resides in the chromosome. Core component of nucleosome. Nucleosomes wrap and compact DNA into chromatin, limiting DNA accessibility to the cellular machineries which require DNA as a template. Histones thereby play a central role in transcription regulation, DNA repair, DNA replication and chromosomal stability. DNA accessibility is regulated via a complex set of post-translational modifications of histones, also called histone code, and nucleosome remodeling. The polypeptide is Histone H2B (HTB1) (Lodderomyces elongisporus (strain ATCC 11503 / CBS 2605 / JCM 1781 / NBRC 1676 / NRRL YB-4239) (Yeast)).